The primary structure comprises 164 residues: Transcription antitermination protein NusB (164 aa).

Belongs to the NusB family.

In terms of biological role, involved in transcription antitermination. Required for transcription of ribosomal RNA (rRNA) genes. Binds specifically to the boxA antiterminator sequence of the ribosomal RNA (rrn) operons. The protein is Transcription antitermination protein NusB of Mycolicibacterium gilvum (strain PYR-GCK) (Mycobacterium gilvum (strain PYR-GCK)).